Reading from the N-terminus, the 317-residue chain is Mitochondrial thiamine pyrophosphate carrier 1 (317 aa).

6 helical membrane passes run 21-41 (AVSGLHAVVAGSVSGLVARSV), 86-106 (VPASAMYVLYGSLQFGTYAWL), 122-142 (LAVGALAGLVSSLLTYPLDLL), 176-196 (GGAWAIAATTLTTGLIFGIYE), 207-227 (LPWLAAAASPTAGLVSKAAVF), and 281-300 (GLTMALCKSTPTTVITLWVY). Solcar repeat units follow at residues 22 to 109 (VSGL…LNTA), 116 to 201 (PPQA…CTIA), and 206 to 306 (GLPW…CLRL).

The protein belongs to the mitochondrial carrier (TC 2.A.29) family.

The protein localises to the mitochondrion inner membrane. Functionally, mitochondrial transporter that mediates uptake of thiamine pyrophosphate (ThPP) into mitochondria. This chain is Mitochondrial thiamine pyrophosphate carrier 1 (TPC1), found in Eremothecium gossypii (strain ATCC 10895 / CBS 109.51 / FGSC 9923 / NRRL Y-1056) (Yeast).